The primary structure comprises 207 residues: Peptidyl-tRNA hydrolase (207 aa).

Tyr-19 contacts tRNA. The active-site Proton acceptor is His-24. Phe-70, Asn-72, and Asn-118 together coordinate tRNA.

This sequence belongs to the PTH family. In terms of assembly, monomer.

The protein resides in the cytoplasm. It carries out the reaction an N-acyl-L-alpha-aminoacyl-tRNA + H2O = an N-acyl-L-amino acid + a tRNA + H(+). In terms of biological role, hydrolyzes ribosome-free peptidyl-tRNAs (with 1 or more amino acids incorporated), which drop off the ribosome during protein synthesis, or as a result of ribosome stalling. Catalyzes the release of premature peptidyl moieties from peptidyl-tRNA molecules trapped in stalled 50S ribosomal subunits, and thus maintains levels of free tRNAs and 50S ribosomes. This chain is Peptidyl-tRNA hydrolase, found in Synechococcus sp. (strain CC9311).